We begin with the raw amino-acid sequence, 636 residues long: DNA-dependent metalloprotease SPRTN (636 aa).

A disordered region spans residues 19 to 42 (QETPAAGWPDEDCPSSKRRRVDPS). Residues 76-183 (RAMFLQFNDK…ASGTNITIYH (108 aa)) form the SprT-like domain. A Zn(2+)-binding site is contributed by histidine 141. The active site involves glutamate 142. Zn(2+) contacts are provided by histidine 145 and histidine 160. Disordered stretches follow at residues 238–382 (TYTK…GKQR) and 398–430 (RGASAVGSSKSSTDASTADYRSNSALDAKPSGK). Residues 241 to 268 (KIKEPENYGKTGKSDKQRDKMPATEMPK) show a composition bias toward basic and acidic residues. A compositionally biased stretch (low complexity) spans 272 to 281 (PPSSTSSSGS). The SHP-box motif lies at 290–298 (FSGRGFVLG). Positions 302–311 (QIPTNKQIQS) are enriched in polar residues. A compositionally biased stretch (pro residues) spans 313–327 (PKAPPEPLHSPPDSP). A compositionally biased stretch (polar residues) spans 341–374 (RLSSGTSNIPRKRSVGNTNAFINVNGSPVRISNG). Low complexity predominate over residues 399 to 416 (GASAVGSSKSSTDASTAD). Residues 451–458 (ESNISKYF) carry the PIP-box motif. The interval 473-608 (TFGSPQKSAI…VRDQQANNPP (136 aa)) is disordered. Composition is skewed to polar residues over residues 492–523 (FGSNQRPDSTSSGIRNTGSPQRSHASATSGSS) and 545–554 (SPRTSGTTPS). A Nuclear localization signal motif is present at residues 535-566 (SNFPSPRNIGSPRTSGTTPSGAKKRSWEEHNS). Composition is skewed to basic and acidic residues over residues 559–570 (RSWEEHNSERVF) and 584–593 (TDKKREEVRS). The segment at 612–636 (TVHCPVCHIRLPESTINDHLDSCLL) adopts a UBZ4-type zinc-finger fold. 4 residues coordinate Zn(2+): cysteine 615, cysteine 618, histidine 630, and cysteine 634.

Belongs to the Spartan family. In terms of assembly, homodimer. Zn(2+) is required as a cofactor. Post-translationally, autocatalytically cleaved in response to double-stranded DNA-binding: autocatalytic cleavage takes place in trans and leads to inactivation.

The protein resides in the nucleus. Its subcellular location is the chromosome. DNA-binding activates the protease activity: single-stranded DNA-binding specifically activates ability to cleave covalent DNA-protein cross-links (DPCs). In contrast, double-stranded DNA-binding specifically activates autocatalytic cleavage, and subsequent inactivation. Functionally, DNA-dependent metalloendopeptidase that mediates the proteolytic cleavage of covalent DNA-protein cross-links (DPCs) during DNA synthesis, thereby playing a key role in maintaining genomic integrity. DPCs are highly toxic DNA lesions that interfere with essential chromatin transactions, such as replication and transcription, and which are induced by reactive agents, such as UV light or formaldehyde. Associates with the DNA replication machinery and specifically removes DPCs during DNA synthesis. Catalyzes proteolytic cleavage of the hmces DNA-protein cross-link following unfolding by the brip1/fancj helicase. Acts as a pleiotropic protease for DNA-binding proteins cross-linked with DNA, such as top1, top2a, histones H3 and H4. Mediates degradation of DPCs that are not ubiquitinated, while it is not able to degrade ubiquitinated DPCs. SPRTN activation requires polymerase collision with DPCs followed by helicase bypass of DPCs. May also act as a 'reader' of ubiquitinated pcna: facilitates chromatin association of rad18 and is required for efficient pcna monoubiquitination, promoting a feed-forward loop to enhance pcna ubiquitination and translesion DNA synthesis. Acts as a regulator of translesion DNA synthesis by recruiting vcp/p97 to sites of DNA damage. The chain is DNA-dependent metalloprotease SPRTN from Danio rerio (Zebrafish).